The primary structure comprises 291 residues: MSALNWKPFVYGGLASITAECGTFPIDLTKTRLQIQGQTNDANFREIRYRGMLHALMRIGREEGLKALYSGIAPAMLRQASYGTIKIGTYQSLKRLAVERPEDETLLVNVVCGILSGVISSAIANPTDVLKIRMQAQNSAVQGGMIDSFMSIYQQEGTRGLWKGVSLTAQRAAIVVGVELPVYDITKKHLILSGLMGDTVATHFLSSFTCGLVGALASNPVDVVRTRMMNQRALRDGRCAGYKGTLDCLLQTWKNEGFFALYKGFWPNWLRLGPWNIIFFLTYEQLKKLDL.

Serine 2 is subject to N-acetylserine. Solcar repeat units follow at residues 7–96 (KPFV…LKRL), 104–189 (ETLL…TKKH), and 198–289 (DTVA…LKKL). The next 6 helical transmembrane spans lie at 9–26 (FVYG…TFPI), 71–89 (GIAP…KIGT), 106–124 (LLVN…SAIA), 164–183 (GVSL…LPVY), 204–224 (FLSS…VDVV), and 264–283 (GFWP…FLTY).

The protein belongs to the mitochondrial carrier (TC 2.A.29) family. As to quaternary structure, interacts with VDAC1. As to expression, present in kidney (at protein level). Expressed predominantly within the kidney cortex in the proximal and distal tubules and at lower levels in the testis and white adipose tissue.

Its subcellular location is the mitochondrion inner membrane. The enzyme catalyses sulfite(in) + sulfate(out) = sulfite(out) + sulfate(in). The catalysed reaction is thiosulfate(in) + sulfate(out) = thiosulfate(out) + sulfate(in). It carries out the reaction sulfate(out) + phosphate(in) = sulfate(in) + phosphate(out). It catalyses the reaction oxalate(in) + sulfate(out) = oxalate(out) + sulfate(in). The enzyme catalyses malonate(in) + sulfate(out) = malonate(out) + sulfate(in). The catalysed reaction is maleate(in) + sulfate(out) = maleate(out) + sulfate(in). It carries out the reaction (S)-malate(in) + sulfate(out) = (S)-malate(out) + sulfate(in). It catalyses the reaction (3S)-citramalate(in) + sulfate(out) = (3S)-citramalate(out) + sulfate(in). The enzyme catalyses (3R)-citramalate(in) + sulfate(out) = (3R)-citramalate(out) + sulfate(in). The catalysed reaction is sulfate(out) + succinate(in) = sulfate(in) + succinate(out). It carries out the reaction (S,S)-tartrate(in) + sulfate(out) = (S,S)-tartrate(out) + sulfate(in). It catalyses the reaction (2R,3R)-tartrate(in) + sulfate(out) = (2R,3R)-tartrate(out) + sulfate(in). The enzyme catalyses D-aspartate(in) + sulfate(out) = D-aspartate(out) + sulfate(in). The catalysed reaction is L-aspartate(in) + sulfate(out) = L-aspartate(out) + sulfate(in). It carries out the reaction sulfate(in) = sulfate(out). It catalyses the reaction phosphate(in) = phosphate(out). The enzyme catalyses (S)-malate(out) = (S)-malate(in). Its function is as follows. Antiporter that transports inorganic anions (sulfate, sulfite, thiosulfate and phosphate) and, to a lesser extent, a variety of dicarboxylates (e.g. malonate, malate and citramalate) and, even more so, aspartate. The sulfate/sulfate exchange is much higher than the phosphate/phosphate and malate/malate exchanges. The transport affinities is higher for sulfate and thiosulfate than for any other substrate. May catalyze the export of sulfite and thiosulfate (the hydrogen sulfide degradation products) from the mitochondria, thereby modulating the level of the hydrogen sulfide. Also may mediate a very low unidirectional transport of sulfate, phosphate and (S)-malate. In Mus musculus (Mouse), this protein is Kidney mitochondrial carrier protein 1.